A 329-amino-acid polypeptide reads, in one-letter code: Cathepsin K (329 aa).

The signal sequence occupies residues 1–15; the sequence is MWGLKVLLLPVMSFA. Positions 16–114 are cleaved as a propeptide — activation peptide; that stretch reads LYPEEILDTH…TLYIPDWEGR (99 aa). N-linked (GlcNAc...) asparagine glycosylation occurs at N103. Cystine bridges form between C136-C177, C170-C210, and C269-C318. C139 is an active-site residue. Residues H276 and N296 contribute to the active site.

The protein belongs to the peptidase C1 family.

It localises to the lysosome. The protein localises to the secreted. The protein resides in the apical cell membrane. It catalyses the reaction Broad proteolytic activity. With small-molecule substrates and inhibitors, the major determinant of specificity is P2, which is preferably Leu, Met &gt; Phe, and not Arg.. Its function is as follows. Thiol protease involved in osteoclastic bone resorption and may participate partially in the disorder of bone remodeling. Displays potent endoprotease activity against fibrinogen at acid pH. May play an important role in extracellular matrix degradation. Involved in the release of thyroid hormone thyroxine (T4) by limited proteolysis of TG/thyroglobulin in the thyroid follicle lumen. The polypeptide is Cathepsin K (CTSK) (Macaca fascicularis (Crab-eating macaque)).